A 1186-amino-acid polypeptide reads, in one-letter code: Partner and localizer of BRCA2 (1186 aa).

The interval 1–160 (MDEPPGKPLS…QKRTFISQER (160 aa)) is required for its oligomerization and is important for its focal concentration at DNA damage sites. An interaction with RAD51 region spans residues 1 to 200 (MDEPPGKPLS…PVTEIRTHLL (200 aa)). Positions 1 to 319 (MDEPPGKPLS…SKSGQLPTSS (319 aa)) are interaction with BRCA1. The tract at residues 1–579 (MDEPPGKPLS…EDSLSWSNSA (579 aa)) is DNA-binding (with the preference D loop &gt; dsDNA &gt; ssDNA). Positions 9–41 (LSCEEKEKLKEKLAFLKREYSKTLARLQRAQRA) form a coiled coil. Disordered regions lie at residues 52-72 (VEEQ…HSEP) and 95-157 (KTSI…TFIS). Residues 120 to 141 (RTDDTQEHFPHRVSDPSGEQKQ) are compositionally biased toward basic and acidic residues. The segment covering 143–152 (LPSRRKKQQK) has biased composition (basic residues). Residues Ser172 and Ser190 each carry the phosphoserine modification. The disordered stretch occupies residues 252–273 (TLSDSGSSQHLEHIPPKGSSEL). Residue Ser285 is modified to Phosphoserine. The disordered stretch occupies residues 346 to 365 (KEQNQTEKSLKSPSDTLDGR). A phosphoserine mark is found at Ser376 and Ser387. Residues 395 to 446 (SCTVPEGLLFPAEYYVRTTRSMSNCQRKVAVEAVIQSHLDVKKKGFKNKNKD) form a chAM (Chromatin-association motif); required for chromatin association, mediates nucleosome association region. The segment at 440–525 (FKNKNKDASK…RKSACTPASD (86 aa)) is disordered. Residue Ser454 is modified to Phosphoserine. Residues 467 to 488 (GTCTGQPSSRTSQKLLSLTKVS) are compositionally biased toward polar residues. At Ser660 the chain carries Phosphoserine. Disordered regions lie at residues 679–698 (PGKS…KTGL) and 774–798 (KQFD…QGQP). A compositionally biased stretch (polar residues) spans 687–698 (PNSQSQHTKTGL). The interval 775–1186 (QFDSSGSPAK…DGNIFVYHYS (412 aa)) is required for interaction with POLH and POLH DNA synthesis stimulation. Ser781 carries the post-translational modification Phosphoserine. The tract at residues 853-1186 (GNLQLVSELK…DGNIFVYHYS (334 aa)) is interaction with RAD51, BRCA2 and POLH. WD repeat units follow at residues 854–915 (NLQL…WHFA), 917–961 (VPVL…QVLL), 962–1009 (KSGN…LMPP), 1010–1052 (EETI…MHID), 1058–1109 (SVCH…MLYC), 1115–1153 (AGRF…LLPP), and 1155–1186 (SDQH…YHYS).

As to quaternary structure, homooligomer; dissociated upon DNA damage thus allowing association with BRCA1. Oligomerization is essential for its focal accumulation at DNA breaks. Part of a BRCA complex containing BRCA1, BRCA2 and PALB2. Interacts with BRCA1 and this interaction is essential for its function in HRR. Interacts with RAD51AP1 and MORF4L1/MRG15. Component of the homologous recombination repair (HR) complex composed of ERCC5/XPG, BRCA2, PALB2, DSS1 and RAD51. Within the complex, interacts with ERCC5/XPG and BRCA2. Interacts with BRCA2, RAD51C, RAD51 and XRCC3; the interactions are direct and it may serve as a scaffold for a HR complex containing PALB2, BRCA2, RAD51C, RAD51 and XRCC3. Interacts with POLH; the interaction is direct.

The protein localises to the nucleus. Its function is as follows. Plays a critical role in homologous recombination repair (HRR) through its ability to recruit BRCA2 and RAD51 to DNA breaks. Strongly stimulates the DNA strand-invasion activity of RAD51, stabilizes the nucleoprotein filament against a disruptive BRC3-BRC4 polypeptide and helps RAD51 to overcome the suppressive effect of replication protein A (RPA). Functionally cooperates with RAD51AP1 in promoting of D-loop formation by RAD51. Serves as the molecular scaffold in the formation of the BRCA1-PALB2-BRCA2 complex which is essential for homologous recombination. Via its WD repeats is proposed to scaffold a HR complex containing RAD51C and BRCA2 which is thought to play a role in HR-mediated DNA repair. Essential partner of BRCA2 that promotes the localization and stability of BRCA2. Also enables its recombinational repair and checkpoint functions of BRCA2. May act by promoting stable association of BRCA2 with nuclear structures, allowing BRCA2 to escape the effects of proteasome-mediated degradation. Binds DNA with high affinity for D loop, which comprises single-stranded, double-stranded and branched DNA structures. May play a role in the extension step after strand invasion at replication-dependent DNA double-strand breaks; together with BRCA2 is involved in both POLH localization at collapsed replication forks and DNA polymerization activity. The polypeptide is Partner and localizer of BRCA2 (PALB2) (Homo sapiens (Human)).